The sequence spans 160 residues: Major strawberry allergen Fra a 1-A (160 aa).

It belongs to the BetVI family. As to quaternary structure, monomer.

In terms of biological role, may be involved in ripening of fruits. The sequence is that of Major strawberry allergen Fra a 1-A from Fragaria ananassa (Strawberry).